The sequence spans 180 residues: Large ribosomal subunit protein uL5 (180 aa).

This sequence belongs to the universal ribosomal protein uL5 family. In terms of assembly, part of the 50S ribosomal subunit; part of the 5S rRNA/L5/L18/L25 subcomplex. Contacts the 5S rRNA and the P site tRNA. Forms a bridge to the 30S subunit in the 70S ribosome.

This is one of the proteins that bind and probably mediate the attachment of the 5S RNA into the large ribosomal subunit, where it forms part of the central protuberance. In the 70S ribosome it contacts protein S13 of the 30S subunit (bridge B1b), connecting the 2 subunits; this bridge is implicated in subunit movement. Contacts the P site tRNA; the 5S rRNA and some of its associated proteins might help stabilize positioning of ribosome-bound tRNAs. The protein is Large ribosomal subunit protein uL5 of Chloroflexus aggregans (strain MD-66 / DSM 9485).